The sequence spans 263 residues: Leukocyte-associated immunoglobulin-like receptor 1 (263 aa).

Residues 1-21 (MPLHSVIVLVLVLCLGWKSNT) form the signal peptide. The Ig-like C2-type domain maps to 27–112 (SDFTICAEPG…VWSQRSNDLQ (86 aa)). The cysteines at positions 49 and 96 are disulfide-linked. An N-linked (GlcNAc...) asparagine glycan is attached at Asn87. A helical membrane pass occupies residues 144–164 (ILTVVSVIFLLCLSLFLFCFL). 2 consecutive short sequence motifs (ITIM motif) follow at residues 225-230 (VTYAQL) and 255-260 (STYAAI). Residues Tyr227 and Tyr257 each carry the phosphotyrosine modification.

Interacts with SH2 domains of tyrosine-protein phosphatases PTPN6 and PTPN11. The interaction with PTPN6 is constitutive. Interacts with the SH2 domain of CSK. Binds with high affinity to extracellular matrix collagens, the interaction is functionally important. Phosphorylation at Tyr-227 and Tyr-257 activates it. May be phosphorylated by LCK. Post-translationally, N-glycosylated. In terms of tissue distribution, expressed in lymphoid and non-lymphoid organs.

It is found in the membrane. Its function is as follows. Functions as an inhibitory receptor that plays a constitutive negative regulatory role on cytolytic function of natural killer (NK) cells, B-cells and T-cells. Activation by Tyr phosphorylation results in recruitment and activation of the phosphatases PTPN6 and PTPN11. It also reduces the increase of intracellular calcium evoked by B-cell receptor ligation. May also play its inhibitory role independently of SH2-containing phosphatases. Modulates cytokine production in CD4+ T-cells, down-regulating IL2 and IFNG production while inducing secretion of transforming growth factor beta. Also down-regulates IgG and IgE production in B-cells as well as IL8, IL10 and TNF secretion. Inhibits proliferation and induces apoptosis in myeloid leukemia cell lines as well as prevents nuclear translocation of NF-kappa-B p65 subunit/RELA and phosphorylation of I-kappa-B alpha/CHUK in these cells. Inhibits the differentiation of peripheral blood precursors towards dendritic cells. This is Leukocyte-associated immunoglobulin-like receptor 1 (Lair1) from Rattus norvegicus (Rat).